Reading from the N-terminus, the 318-residue chain is tRNA U34 carboxymethyltransferase (318 aa).

Lys88, Trp102, Lys107, Gly126, Met192, Tyr196, and Arg311 together coordinate carboxy-S-adenosyl-L-methionine.

The protein belongs to the class I-like SAM-binding methyltransferase superfamily. CmoB family. Homotetramer.

It catalyses the reaction carboxy-S-adenosyl-L-methionine + 5-hydroxyuridine(34) in tRNA = 5-carboxymethoxyuridine(34) in tRNA + S-adenosyl-L-homocysteine + H(+). Functionally, catalyzes carboxymethyl transfer from carboxy-S-adenosyl-L-methionine (Cx-SAM) to 5-hydroxyuridine (ho5U) to form 5-carboxymethoxyuridine (cmo5U) at position 34 in tRNAs. In Pseudomonas fluorescens (strain SBW25), this protein is tRNA U34 carboxymethyltransferase.